The sequence spans 203 residues: UPF0637 protein Sca_0732 (203 aa).

The protein belongs to the UPF0637 family.

This Staphylococcus carnosus (strain TM300) protein is UPF0637 protein Sca_0732.